The following is a 157-amino-acid chain: Large ribosomal subunit protein mL59 (157 aa).

The protein belongs to the mitochondrion-specific ribosomal protein mL59 family. In terms of assembly, component of the mitochondrial large ribosomal subunit (mt-LSU). Mature yeast 74S mitochondrial ribosomes consist of a small (37S) and a large (54S) subunit. The 37S small subunit contains a 15S ribosomal RNA (15S mt-rRNA) and 34 different proteins. The 54S large subunit contains a 21S rRNA (21S mt-rRNA) and 46 different proteins.

The protein localises to the mitochondrion. Component of the mitochondrial ribosome (mitoribosome), a dedicated translation machinery responsible for the synthesis of mitochondrial genome-encoded proteins, including at least some of the essential transmembrane subunits of the mitochondrial respiratory chain. The mitoribosomes are attached to the mitochondrial inner membrane and translation products are cotranslationally integrated into the membrane. The sequence is that of Large ribosomal subunit protein mL59 (MRPL25) from Saccharomyces cerevisiae (strain ATCC 204508 / S288c) (Baker's yeast).